We begin with the raw amino-acid sequence, 431 residues long: 3-phosphoshikimate 1-carboxyvinyltransferase (431 aa).

K22, S23, and R27 together coordinate 3-phosphoshikimate. K22 is a binding site for phosphoenolpyruvate. Residues G94 and R122 each coordinate phosphoenolpyruvate. Residues S168, S169, Q170, S196, D315, and K342 each coordinate 3-phosphoshikimate. Residue Q170 participates in phosphoenolpyruvate binding. Residue D315 is the Proton acceptor of the active site. Positions 346, 390, and 414 each coordinate phosphoenolpyruvate.

It belongs to the EPSP synthase family. As to quaternary structure, monomer.

It is found in the cytoplasm. It catalyses the reaction 3-phosphoshikimate + phosphoenolpyruvate = 5-O-(1-carboxyvinyl)-3-phosphoshikimate + phosphate. It functions in the pathway metabolic intermediate biosynthesis; chorismate biosynthesis; chorismate from D-erythrose 4-phosphate and phosphoenolpyruvate: step 6/7. Its function is as follows. Catalyzes the transfer of the enolpyruvyl moiety of phosphoenolpyruvate (PEP) to the 5-hydroxyl of shikimate-3-phosphate (S3P) to produce enolpyruvyl shikimate-3-phosphate and inorganic phosphate. In Nitrosomonas europaea (strain ATCC 19718 / CIP 103999 / KCTC 2705 / NBRC 14298), this protein is 3-phosphoshikimate 1-carboxyvinyltransferase.